Reading from the N-terminus, the 89-residue chain is Small ribosomal subunit protein uS14A (89 aa).

It belongs to the universal ribosomal protein uS14 family. As to quaternary structure, part of the 30S ribosomal subunit. Contacts proteins S3 and S10.

Its function is as follows. Binds 16S rRNA, required for the assembly of 30S particles and may also be responsible for determining the conformation of the 16S rRNA at the A site. This is Small ribosomal subunit protein uS14A from Bacillus licheniformis (strain ATCC 14580 / DSM 13 / JCM 2505 / CCUG 7422 / NBRC 12200 / NCIMB 9375 / NCTC 10341 / NRRL NRS-1264 / Gibson 46).